We begin with the raw amino-acid sequence, 443 residues long: Type I restriction enzyme HindI methylase subunit (443 aa).

S-adenosyl-L-methionine contacts are provided by residues 117-122, 146-148, and Glu-173; these read QYFTPK and SGG.

This sequence belongs to the N(4)/N(6)-methyltransferase family. The type I restriction/modification system is composed of three polypeptides R, M and S; the restriction enzyme has stoichiometry R(2)M(2)S(1) while the methyltransferase is M(2)S(1).

The enzyme catalyses a 2'-deoxyadenosine in DNA + S-adenosyl-L-methionine = an N(6)-methyl-2'-deoxyadenosine in DNA + S-adenosyl-L-homocysteine + H(+). Functionally, the subtype gamma methyltransferase (M) subunit of a type I restriction enzyme. The M and S subunits together form a methyltransferase (MTase) that methylates adenosines in the sequence 5'-RAACN(5)TAG-3'. Methylation protects against cleavage by HindI. In the presence of the R subunit the complex can also act as an endonuclease, binding to the same target sequence but cutting the DNA some distance from this site. Whether the DNA is cut or modified depends on the methylation state of the target sequence. When the target site is unmodified, the DNA is cut. When the target site is hemimethylated, the complex acts as a maintenance MTase modifying the DNA so that both strands become methylated. After locating a non-methylated recognition site, the enzyme complex serves as a molecular motor that translocates DNA in an ATP-dependent manner until a collision occurs that triggers cleavage. The polypeptide is Type I restriction enzyme HindI methylase subunit (Haemophilus influenzae (strain ATCC 51907 / DSM 11121 / KW20 / Rd)).